The sequence spans 371 residues: tRNA-specific 2-thiouridylase MnmA (371 aa).

ATP is bound by residues 12–19 (GMSGGVDS) and M38. Residues 98–100 (NPD) are interaction with target base in tRNA. The active-site Nucleophile is C103. A disulfide bridge links C103 with C200. G128 contacts ATP. Residues 150-152 (KDQ) form an interaction with tRNA region. The active-site Cysteine persulfide intermediate is C200. Residues 312–313 (RY) form an interaction with tRNA region.

This sequence belongs to the MnmA/TRMU family. As to quaternary structure, interacts with TusE.

It is found in the cytoplasm. The catalysed reaction is S-sulfanyl-L-cysteinyl-[protein] + uridine(34) in tRNA + AH2 + ATP = 2-thiouridine(34) in tRNA + L-cysteinyl-[protein] + A + AMP + diphosphate + H(+). Catalyzes the 2-thiolation of uridine at the wobble position (U34) of tRNA(Lys), tRNA(Glu) and tRNA(Gln), leading to the formation of s(2)U34, the first step of tRNA-mnm(5)s(2)U34 synthesis. Sulfur is provided by IscS, via a sulfur-relay system. Binds ATP and its substrate tRNAs. The polypeptide is tRNA-specific 2-thiouridylase MnmA (Yersinia pestis bv. Antiqua (strain Antiqua)).